Reading from the N-terminus, the 61-residue chain is Putative antitoxin RelB2 (61 aa).

In terms of biological role, antitoxin component of a type II toxin-antitoxin (TA) system. Its cognate toxin is RelE2 (Potential). This is Putative antitoxin RelB2 (relB2) from Methanocaldococcus jannaschii (strain ATCC 43067 / DSM 2661 / JAL-1 / JCM 10045 / NBRC 100440) (Methanococcus jannaschii).